Consider the following 192-residue polypeptide: Der GTPase-activating protein YihI (192 aa).

The interval 1 to 80 is disordered; that stretch reads MSRTKKTRRI…KAAVKEVKDP (80 aa). Basic and acidic residues-rich tracts occupy residues 9–25, 37–48, and 65–80; these read RITD…KPEQ, TRYELDAKAREE, and DPAE…VKDP.

This sequence belongs to the YihI family. As to quaternary structure, interacts with Der.

Functionally, a GTPase-activating protein (GAP) that modifies Der/EngA GTPase function. May play a role in ribosome biogenesis. The chain is Der GTPase-activating protein YihI from Actinobacillus pleuropneumoniae serotype 7 (strain AP76).